Reading from the N-terminus, the 65-residue chain is Putative beta-neurotoxin RjAa7 (65 aa).

An LCN-type CS-alpha/beta domain is found at Lys1–Gly64. 4 cysteine pairs are disulfide-bonded: Cys11–Cys63, Cys15–Cys37, Cys22–Cys44, and Cys26–Cys46.

The protein belongs to the long (4 C-C) scorpion toxin superfamily. Sodium channel inhibitor family. Beta subfamily. As to expression, expressed by the venom gland.

The protein resides in the secreted. Beta toxins bind voltage-independently at site-4 of sodium channels (Nav) and shift the voltage of activation toward more negative potentials thereby affecting sodium channel activation and promoting spontaneous and repetitive firing. This Rhopalurus junceus (Caribbean blue scorpion) protein is Putative beta-neurotoxin RjAa7.